Reading from the N-terminus, the 508-residue chain is Photosystem II CP47 reaction center protein (508 aa).

6 consecutive transmembrane segments (helical) span residues 21-36, 101-115, 140-156, 203-218, 237-252, and 457-472; these read SVHI…WAGS, IVFS…IWHW, GIHL…FGAF, IAAG…FHLS, VLSS…AFVV, and SFAL…HGAR.

It belongs to the PsbB/PsbC family. PsbB subfamily. As to quaternary structure, PSII is composed of 1 copy each of membrane proteins PsbA, PsbB, PsbC, PsbD, PsbE, PsbF, PsbH, PsbI, PsbJ, PsbK, PsbL, PsbM, PsbT, PsbX, PsbY, PsbZ, Psb30/Ycf12, at least 3 peripheral proteins of the oxygen-evolving complex and a large number of cofactors. It forms dimeric complexes. The cofactor is Binds multiple chlorophylls. PSII binds additional chlorophylls, carotenoids and specific lipids..

The protein resides in the plastid. It localises to the chloroplast thylakoid membrane. One of the components of the core complex of photosystem II (PSII). It binds chlorophyll and helps catalyze the primary light-induced photochemical processes of PSII. PSII is a light-driven water:plastoquinone oxidoreductase, using light energy to abstract electrons from H(2)O, generating O(2) and a proton gradient subsequently used for ATP formation. The chain is Photosystem II CP47 reaction center protein from Lemna minor (Common duckweed).